The following is a 370-amino-acid chain: Quinolinate synthase (370 aa).

Residues H62 and S83 each contribute to the iminosuccinate site. C128 is a [4Fe-4S] cluster binding site. Iminosuccinate-binding positions include 154 to 156 (YAN) and S171. C215 lines the [4Fe-4S] cluster pocket. Iminosuccinate-binding positions include 241 to 243 (HPE) and T258. C312 is a [4Fe-4S] cluster binding site.

This sequence belongs to the quinolinate synthase family. Type 1 subfamily. Requires [4Fe-4S] cluster as cofactor.

The protein localises to the cytoplasm. The enzyme catalyses iminosuccinate + dihydroxyacetone phosphate = quinolinate + phosphate + 2 H2O + H(+). The protein operates within cofactor biosynthesis; NAD(+) biosynthesis; quinolinate from iminoaspartate: step 1/1. In terms of biological role, catalyzes the condensation of iminoaspartate with dihydroxyacetone phosphate to form quinolinate. The polypeptide is Quinolinate synthase (Neisseria meningitidis serogroup C / serotype 2a (strain ATCC 700532 / DSM 15464 / FAM18)).